The chain runs to 236 residues: 1-(5-phosphoribosyl)-5-[(5-phosphoribosylamino)methylideneamino] imidazole-4-carboxamide isomerase (236 aa).

Aspartate 8 functions as the Proton acceptor in the catalytic mechanism. Residue aspartate 127 is the Proton donor of the active site.

It belongs to the HisA/HisF family.

Its subcellular location is the cytoplasm. It carries out the reaction 1-(5-phospho-beta-D-ribosyl)-5-[(5-phospho-beta-D-ribosylamino)methylideneamino]imidazole-4-carboxamide = 5-[(5-phospho-1-deoxy-D-ribulos-1-ylimino)methylamino]-1-(5-phospho-beta-D-ribosyl)imidazole-4-carboxamide. Its pathway is amino-acid biosynthesis; L-histidine biosynthesis; L-histidine from 5-phospho-alpha-D-ribose 1-diphosphate: step 4/9. In Sulfurimonas denitrificans (strain ATCC 33889 / DSM 1251) (Thiomicrospira denitrificans (strain ATCC 33889 / DSM 1251)), this protein is 1-(5-phosphoribosyl)-5-[(5-phosphoribosylamino)methylideneamino] imidazole-4-carboxamide isomerase.